The primary structure comprises 141 residues: Nucleoside diphosphate kinase (141 aa).

Residues Lys11, Phe59, Arg87, Thr93, Arg104, and Asn114 each contribute to the ATP site. Residue His117 is the Pros-phosphohistidine intermediate of the active site.

This sequence belongs to the NDK family. In terms of assembly, homotetramer. Mg(2+) serves as cofactor.

The protein localises to the cytoplasm. It carries out the reaction a 2'-deoxyribonucleoside 5'-diphosphate + ATP = a 2'-deoxyribonucleoside 5'-triphosphate + ADP. The enzyme catalyses a ribonucleoside 5'-diphosphate + ATP = a ribonucleoside 5'-triphosphate + ADP. In terms of biological role, major role in the synthesis of nucleoside triphosphates other than ATP. The ATP gamma phosphate is transferred to the NDP beta phosphate via a ping-pong mechanism, using a phosphorylated active-site intermediate. The protein is Nucleoside diphosphate kinase of Pseudomonas fluorescens (strain SBW25).